The primary structure comprises 233 residues: Adenosylcobinamide-GDP ribazoletransferase (233 aa).

The next 7 membrane-spanning stretches (helical) occupy residues 24-44 (LWAL…VLYL), 46-66 (LPLS…LLHL), 96-116 (IAGV…LPLL), 117-137 (PFYA…LALA), 158-178 (QLTL…YIEP), 181-198 (ISSL…RLSL), and 209-229 (IGAV…VVWV).

Belongs to the CobS family. It depends on Mg(2+) as a cofactor.

Its subcellular location is the cell membrane. The enzyme catalyses alpha-ribazole + adenosylcob(III)inamide-GDP = adenosylcob(III)alamin + GMP + H(+). It carries out the reaction alpha-ribazole 5'-phosphate + adenosylcob(III)inamide-GDP = adenosylcob(III)alamin 5'-phosphate + GMP + H(+). The protein operates within cofactor biosynthesis; adenosylcobalamin biosynthesis; adenosylcobalamin from cob(II)yrinate a,c-diamide: step 7/7. Functionally, joins adenosylcobinamide-GDP and alpha-ribazole to generate adenosylcobalamin (Ado-cobalamin). Also synthesizes adenosylcobalamin 5'-phosphate from adenosylcobinamide-GDP and alpha-ribazole 5'-phosphate. The polypeptide is Adenosylcobinamide-GDP ribazoletransferase (Thermococcus gammatolerans (strain DSM 15229 / JCM 11827 / EJ3)).